Here is a 314-residue protein sequence, read N- to C-terminus: GTP cyclohydrolase FolE2 (314 aa).

The segment at 290 to 314 (DASAWSAPQAAAPDQQESFATGNER) is disordered. Residues 291-304 (ASAWSAPQAAAPDQ) show a composition bias toward low complexity. The segment covering 305-314 (QESFATGNER) has biased composition (polar residues).

The protein belongs to the GTP cyclohydrolase IV family.

It carries out the reaction GTP + H2O = 7,8-dihydroneopterin 3'-triphosphate + formate + H(+). It functions in the pathway cofactor biosynthesis; 7,8-dihydroneopterin triphosphate biosynthesis; 7,8-dihydroneopterin triphosphate from GTP: step 1/1. Its function is as follows. Converts GTP to 7,8-dihydroneopterin triphosphate. The sequence is that of GTP cyclohydrolase FolE2 from Pseudomonas putida (strain ATCC 47054 / DSM 6125 / CFBP 8728 / NCIMB 11950 / KT2440).